A 139-amino-acid polypeptide reads, in one-letter code: MPTSKQIINKKQDEVSDIYGKEMIRVIRSLLKHKIIDTESLSKKTGYSINTVRRALYTLQKMGIVRYINKEDKTLWQLLETDYEKILDTLLEPYKKEEKAETGELLFICPKCGRKYTLDEAEMYEFRCPEDGTLLVANQ.

An HTH TFE/IIEalpha-type domain is found at isoleucine 7 to leucine 91.

It belongs to the TFE family. As to quaternary structure, monomer. Interaction with RNA polymerase subunits RpoF and RpoE is necessary for Tfe stimulatory transcription activity. Able to interact with Tbp and RNA polymerase in the absence of DNA promoter. Interacts both with the preinitiation and elongation complexes.

In terms of biological role, transcription factor that plays a role in the activation of archaeal genes transcribed by RNA polymerase. Facilitates transcription initiation by enhancing TATA-box recognition by TATA-box-binding protein (Tbp), and transcription factor B (Tfb) and RNA polymerase recruitment. Not absolutely required for transcription in vitro, but particularly important in cases where Tbp or Tfb function is not optimal. It dynamically alters the nucleic acid-binding properties of RNA polymerases by stabilizing the initiation complex and destabilizing elongation complexes. Seems to translocate with the RNA polymerase following initiation and acts by binding to the non template strand of the transcription bubble in elongation complexes. In Nanoarchaeum equitans (strain Kin4-M), this protein is Transcription factor E.